Consider the following 645-residue polypeptide: Exoribonuclease 2 (645 aa).

Residues 191–517 form the RNB domain; sequence REDLTELNFI…MNHRLLKALI (327 aa). Residues 563–645 form the S1 motif domain; it reads HIRYSAEIID…DNRSIIAKIV (83 aa).

This sequence belongs to the RNR ribonuclease family. RNase II subfamily.

Its subcellular location is the cytoplasm. The enzyme catalyses Exonucleolytic cleavage in the 3'- to 5'-direction to yield nucleoside 5'-phosphates.. Involved in mRNA degradation. Hydrolyzes single-stranded polyribonucleotides processively in the 3' to 5' direction. The protein is Exoribonuclease 2 of Baumannia cicadellinicola subsp. Homalodisca coagulata.